Reading from the N-terminus, the 654-residue chain is tRNA 5-methylaminomethyl-2-thiouridine biosynthesis bifunctional protein MnmC (654 aa).

The segment at 1 to 235 is tRNA (mnm(5)s(2)U34)-methyltransferase; that stretch reads MSDFQHAQLD…KREMLGGTYQ (235 aa). Residues 261-654 are FAD-dependent cmnm(5)s(2)U34 oxidoreductase; it reads VGGGLAGCAS…LRDLVRGQRG (394 aa).

The protein in the N-terminal section; belongs to the methyltransferase superfamily. tRNA (mnm(5)s(2)U34)-methyltransferase family. It in the C-terminal section; belongs to the DAO family. FAD serves as cofactor.

It localises to the cytoplasm. The enzyme catalyses 5-aminomethyl-2-thiouridine(34) in tRNA + S-adenosyl-L-methionine = 5-methylaminomethyl-2-thiouridine(34) in tRNA + S-adenosyl-L-homocysteine + H(+). Its function is as follows. Catalyzes the last two steps in the biosynthesis of 5-methylaminomethyl-2-thiouridine (mnm(5)s(2)U) at the wobble position (U34) in tRNA. Catalyzes the FAD-dependent demodification of cmnm(5)s(2)U34 to nm(5)s(2)U34, followed by the transfer of a methyl group from S-adenosyl-L-methionine to nm(5)s(2)U34, to form mnm(5)s(2)U34. This Pseudomonas paraeruginosa (strain DSM 24068 / PA7) (Pseudomonas aeruginosa (strain PA7)) protein is tRNA 5-methylaminomethyl-2-thiouridine biosynthesis bifunctional protein MnmC.